The following is a 280-amino-acid chain: 2-dehydro-3-deoxyphosphooctonate aldolase (280 aa).

Belongs to the KdsA family.

Its subcellular location is the cytoplasm. It catalyses the reaction D-arabinose 5-phosphate + phosphoenolpyruvate + H2O = 3-deoxy-alpha-D-manno-2-octulosonate-8-phosphate + phosphate. Its pathway is carbohydrate biosynthesis; 3-deoxy-D-manno-octulosonate biosynthesis; 3-deoxy-D-manno-octulosonate from D-ribulose 5-phosphate: step 2/3. The protein operates within bacterial outer membrane biogenesis; lipopolysaccharide biosynthesis. This Coxiella burnetii (strain Dugway 5J108-111) protein is 2-dehydro-3-deoxyphosphooctonate aldolase.